We begin with the raw amino-acid sequence, 239 residues long: Purine nucleoside phosphorylase DeoD-type (239 aa).

Residue histidine 5 coordinates a purine D-ribonucleoside. Residues glycine 21, arginine 25, arginine 44, and 89 to 92 (RVGS) each bind phosphate. Residues 180 to 182 (EME) and 204 to 205 (SD) contribute to the a purine D-ribonucleoside site. Aspartate 205 (proton donor) is an active-site residue.

Belongs to the PNP/UDP phosphorylase family. As to quaternary structure, homohexamer; trimer of homodimers.

It carries out the reaction a purine D-ribonucleoside + phosphate = a purine nucleobase + alpha-D-ribose 1-phosphate. The enzyme catalyses a purine 2'-deoxy-D-ribonucleoside + phosphate = a purine nucleobase + 2-deoxy-alpha-D-ribose 1-phosphate. Functionally, catalyzes the reversible phosphorolytic breakdown of the N-glycosidic bond in the beta-(deoxy)ribonucleoside molecules, with the formation of the corresponding free purine bases and pentose-1-phosphate. The chain is Purine nucleoside phosphorylase DeoD-type from Klebsiella pneumoniae.